A 173-amino-acid polypeptide reads, in one-letter code: Xanthine-guanine phosphoribosyltransferase (173 aa).

5-phospho-alpha-D-ribose 1-diphosphate-binding positions include 48-49 (RG) and 107-115 (DDLVDTGKT). Asp108 serves as a coordination point for Mg(2+). Asp111 and Ile154 together coordinate guanine. Xanthine-binding residues include Asp111 and Ile154. Residues 111 to 115 (DTGKT) and 153 to 154 (WI) contribute to the GMP site.

The protein belongs to the purine/pyrimidine phosphoribosyltransferase family. XGPT subfamily. Homotetramer. Mg(2+) is required as a cofactor.

Its subcellular location is the cell inner membrane. The catalysed reaction is GMP + diphosphate = guanine + 5-phospho-alpha-D-ribose 1-diphosphate. It carries out the reaction XMP + diphosphate = xanthine + 5-phospho-alpha-D-ribose 1-diphosphate. The enzyme catalyses IMP + diphosphate = hypoxanthine + 5-phospho-alpha-D-ribose 1-diphosphate. It functions in the pathway purine metabolism; GMP biosynthesis via salvage pathway; GMP from guanine: step 1/1. It participates in purine metabolism; XMP biosynthesis via salvage pathway; XMP from xanthine: step 1/1. Purine salvage pathway enzyme that catalyzes the transfer of the ribosyl-5-phosphate group from 5-phospho-alpha-D-ribose 1-diphosphate (PRPP) to the N9 position of the 6-oxopurines guanine and xanthine to form the corresponding ribonucleotides GMP (guanosine 5'-monophosphate) and XMP (xanthosine 5'-monophosphate), with the release of PPi. To a lesser extent, also acts on hypoxanthine. The polypeptide is Xanthine-guanine phosphoribosyltransferase (Rhodopseudomonas palustris (strain ATCC BAA-98 / CGA009)).